A 121-amino-acid polypeptide reads, in one-letter code: Non-specific lipid-transfer protein 9 (121 aa).

The first 27 residues, 1–27 (MRKSISIAFVIAITIFMSHLNVFTVYS), serve as a signal peptide directing secretion. Cystine bridges form between cysteine 31–cysteine 80, cysteine 41–cysteine 57, cysteine 58–cysteine 102, and cysteine 78–cysteine 116.

Belongs to the plant LTP family.

Functionally, plant non-specific lipid-transfer proteins transfer phospholipids as well as galactolipids across membranes. May play a role in wax or cutin deposition in the cell walls of expanding epidermal cells and certain secretory tissues. This chain is Non-specific lipid-transfer protein 9 (LTP9), found in Arabidopsis thaliana (Mouse-ear cress).